A 548-amino-acid polypeptide reads, in one-letter code: Glucose-6-phosphate isomerase (548 aa).

Glu-359 serves as the catalytic Proton donor. Residues His-390 and Lys-510 contribute to the active site.

This sequence belongs to the GPI family.

It is found in the cytoplasm. It carries out the reaction alpha-D-glucose 6-phosphate = beta-D-fructose 6-phosphate. Its pathway is carbohydrate biosynthesis; gluconeogenesis. The protein operates within carbohydrate degradation; glycolysis; D-glyceraldehyde 3-phosphate and glycerone phosphate from D-glucose: step 2/4. Its function is as follows. Catalyzes the reversible isomerization of glucose-6-phosphate to fructose-6-phosphate. The protein is Glucose-6-phosphate isomerase of Gloeobacter violaceus (strain ATCC 29082 / PCC 7421).